A 265-amino-acid polypeptide reads, in one-letter code: Chanoclavine-I dehydrogenase easD (265 aa).

An N-terminal signal peptide occupies residues 1 to 20 (MSFVSSKIFAITGGASGIGA). NADP(+)-binding residues include isoleucine 18, aspartate 66, arginine 132, tyrosine 169, lysine 173, and threonine 205. The active-site Proton donor is tyrosine 169. Lysine 173 functions as the Lowers pKa of active site Tyr in the catalytic mechanism.

Belongs to the short-chain dehydrogenases/reductases (SDR) family. As to quaternary structure, homotetramer.

It carries out the reaction chanoclavine-I + NAD(+) = chanoclavine-I aldehyde + NADH + H(+). It participates in alkaloid biosynthesis; ergot alkaloid biosynthesis. Functionally, chanoclavine-I dehydrogenase; part of the gene cluster that mediates the biosynthesis of fungal ergot alkaloid. DmaW catalyzes the first step of ergot alkaloid biosynthesis by condensing dimethylallyl diphosphate (DMAP) and tryptophan to form 4-dimethylallyl-L-tryptophan. The second step is catalyzed by the methyltransferase easF that methylates 4-dimethylallyl-L-tryptophan in the presence of S-adenosyl-L-methionine, resulting in the formation of 4-dimethylallyl-L-abrine. The catalase easC and the FAD-dependent oxidoreductase easE then transform 4-dimethylallyl-L-abrine to chanoclavine-I which is further oxidized by easD in the presence of NAD(+), resulting in the formation of chanoclavine-I aldehyde. Chanoclavine-I aldehyde is the precursor of ergoamides and ergopeptines in Clavicipitaceae, and clavine-type alcaloids such as fumiclavine in Trichocomaceae. However, the metabolites downstream of chanoclavine-I aldehyde in Arthrodermataceae have not been identified yet. The sequence is that of Chanoclavine-I dehydrogenase easD from Trichophyton verrucosum (strain HKI 0517).